The following is a 418-amino-acid chain: 3-isopropylmalate dehydratase large subunit (418 aa).

[4Fe-4S] cluster is bound by residues Cys298, Cys358, and Cys361.

It belongs to the aconitase/IPM isomerase family. LeuC type 2 subfamily. As to quaternary structure, heterodimer of LeuC and LeuD. [4Fe-4S] cluster is required as a cofactor.

The enzyme catalyses (2R,3S)-3-isopropylmalate = (2S)-2-isopropylmalate. The protein operates within amino-acid biosynthesis; L-leucine biosynthesis; L-leucine from 3-methyl-2-oxobutanoate: step 2/4. Catalyzes the isomerization between 2-isopropylmalate and 3-isopropylmalate, via the formation of 2-isopropylmaleate. This chain is 3-isopropylmalate dehydratase large subunit, found in Caldanaerobacter subterraneus subsp. tengcongensis (strain DSM 15242 / JCM 11007 / NBRC 100824 / MB4) (Thermoanaerobacter tengcongensis).